The following is a 104-amino-acid chain: Replication restart protein PriB (104 aa).

The 101-residue stretch at 1–101 folds into the SSB domain; sequence MTNRLTLSGT…LHAEQIELID (101 aa).

The protein belongs to the PriB family. Homodimer. Interacts with PriA and DnaT. Component of the replication restart primosome. Primosome assembly occurs via a 'hand-off' mechanism. PriA binds to replication forks, subsequently PriB then DnaT bind; DnaT then displaces ssDNA to generate the helicase loading substrate.

Its function is as follows. Involved in the restart of stalled replication forks, which reloads the replicative helicase on sites other than the origin of replication; the PriA-PriB pathway is the major replication restart pathway. During primosome assembly it facilitates complex formation between PriA and DnaT on DNA; stabilizes PriA on DNA. Stimulates the DNA unwinding activity of PriA helicase. This chain is Replication restart protein PriB, found in Salmonella typhi.